Here is a 181-residue protein sequence, read N- to C-terminus: Adenine phosphoribosyltransferase (181 aa).

Belongs to the purine/pyrimidine phosphoribosyltransferase family. In terms of assembly, homodimer.

It is found in the cytoplasm. The enzyme catalyses AMP + diphosphate = 5-phospho-alpha-D-ribose 1-diphosphate + adenine. Its pathway is purine metabolism; AMP biosynthesis via salvage pathway; AMP from adenine: step 1/1. Functionally, catalyzes a salvage reaction resulting in the formation of AMP, that is energically less costly than de novo synthesis. In Shewanella amazonensis (strain ATCC BAA-1098 / SB2B), this protein is Adenine phosphoribosyltransferase.